We begin with the raw amino-acid sequence, 138 residues long: DNA-directed RNA polymerase subunit omega (138 aa).

Positions 117 to 138 (NLLGRDNFFSTPENRNTSNTDS) are disordered. The span at 124–138 (FFSTPENRNTSNTDS) shows a compositional bias: polar residues.

The protein belongs to the RNA polymerase subunit omega family. As to quaternary structure, the RNAP catalytic core consists of 2 alpha, 1 beta, 1 beta' and 1 omega subunit. When a sigma factor is associated with the core the holoenzyme is formed, which can initiate transcription.

It carries out the reaction RNA(n) + a ribonucleoside 5'-triphosphate = RNA(n+1) + diphosphate. Its function is as follows. Promotes RNA polymerase assembly. Latches the N- and C-terminal regions of the beta' subunit thereby facilitating its interaction with the beta and alpha subunits. The polypeptide is DNA-directed RNA polymerase subunit omega (Ehrlichia canis (strain Jake)).